Consider the following 424-residue polypeptide: Serine--tRNA ligase (424 aa).

230-232 (TAE) lines the L-serine pocket. 261–263 (RAE) contributes to the ATP binding site. Position 284 (glutamate 284) interacts with L-serine. 348 to 351 (EISS) contacts ATP. Serine 384 provides a ligand contact to L-serine.

It belongs to the class-II aminoacyl-tRNA synthetase family. Type-1 seryl-tRNA synthetase subfamily. Homodimer. The tRNA molecule binds across the dimer.

It localises to the cytoplasm. It catalyses the reaction tRNA(Ser) + L-serine + ATP = L-seryl-tRNA(Ser) + AMP + diphosphate + H(+). The enzyme catalyses tRNA(Sec) + L-serine + ATP = L-seryl-tRNA(Sec) + AMP + diphosphate + H(+). It participates in aminoacyl-tRNA biosynthesis; selenocysteinyl-tRNA(Sec) biosynthesis; L-seryl-tRNA(Sec) from L-serine and tRNA(Sec): step 1/1. Functionally, catalyzes the attachment of serine to tRNA(Ser). Is also able to aminoacylate tRNA(Sec) with serine, to form the misacylated tRNA L-seryl-tRNA(Sec), which will be further converted into selenocysteinyl-tRNA(Sec). This chain is Serine--tRNA ligase, found in Desulforamulus reducens (strain ATCC BAA-1160 / DSM 100696 / MI-1) (Desulfotomaculum reducens).